The chain runs to 188 residues: dCTP deaminase (188 aa).

DCTP is bound by residues 111-116, 135-137, Gln156, Tyr170, and Gln180; these read KSTYAR and TLE. Glu137 functions as the Proton donor/acceptor in the catalytic mechanism.

It belongs to the dCTP deaminase family. Homotrimer.

It catalyses the reaction dCTP + H2O + H(+) = dUTP + NH4(+). The protein operates within pyrimidine metabolism; dUMP biosynthesis; dUMP from dCTP (dUTP route): step 1/2. In terms of biological role, catalyzes the deamination of dCTP to dUTP. The polypeptide is dCTP deaminase (Polaromonas sp. (strain JS666 / ATCC BAA-500)).